The chain runs to 384 residues: Cyclohexane-1-carbonyl-CoA dehydrogenase (384 aa).

The protein belongs to the acyl-CoA dehydrogenase family. Homotetramer. FAD serves as cofactor.

The enzyme catalyses cyclohexane-1-carbonyl-CoA + oxidized [electron-transfer flavoprotein] + H(+) = cyclohex-1-ene-1-carbonyl-CoA + reduced [electron-transfer flavoprotein]. Its function is as follows. Mediates the conversion of cyclohexane-1-carbonyl-CoA (ChCoA) into cyclohex-1-ene-1-carbonyl-CoA in biosynthesis of cyclohexane-1-carboxylate, a by-product produced during fermentation of benzoate and crotonate to acetate. The sequence is that of Cyclohexane-1-carbonyl-CoA dehydrogenase from Syntrophus aciditrophicus (strain SB).